The primary structure comprises 66 residues: Small ribosomal subunit protein eS27 (66 aa).

Zn(2+) contacts are provided by Cys21, Cys24, Cys40, and Cys43. The C4-type zinc-finger motif lies at 21 to 43 (CPNCGNEQTIFSHATFPVRCLSC).

It belongs to the eukaryotic ribosomal protein eS27 family. As to quaternary structure, part of the 30S ribosomal subunit. Zn(2+) is required as a cofactor.

The chain is Small ribosomal subunit protein eS27 from Saccharolobus solfataricus (strain ATCC 35092 / DSM 1617 / JCM 11322 / P2) (Sulfolobus solfataricus).